Consider the following 62-residue polypeptide: Photosystem II reaction center protein Z (62 aa).

Helical transmembrane passes span 8 to 28 (AVFA…LVFA) and 41 to 61 (FSGT…NSLI).

This sequence belongs to the PsbZ family. In terms of assembly, PSII is composed of 1 copy each of membrane proteins PsbA, PsbB, PsbC, PsbD, PsbE, PsbF, PsbH, PsbI, PsbJ, PsbK, PsbL, PsbM, PsbT, PsbY, PsbZ, Psb30/Ycf12, at least 3 peripheral proteins of the oxygen-evolving complex and a large number of cofactors. It forms dimeric complexes.

It is found in the plastid. It localises to the chloroplast thylakoid membrane. In terms of biological role, may control the interaction of photosystem II (PSII) cores with the light-harvesting antenna, regulates electron flow through the 2 photosystem reaction centers. PSII is a light-driven water plastoquinone oxidoreductase, using light energy to abstract electrons from H(2)O, generating a proton gradient subsequently used for ATP formation. This is Photosystem II reaction center protein Z from Hordeum vulgare (Barley).